We begin with the raw amino-acid sequence, 275 residues long: Anthracycline biosynthesis protein DauV (275 aa).

2 VOC domains span residues Ala8–Lys136 and Ser150–Leu263.

The protein operates within antibiotic biosynthesis; daunorubicin biosynthesis. Its pathway is antibiotic biosynthesis; carminomycin biosynthesis. Its function is as follows. Involved in the biosynthesis of the anthracyclines carminomycin and daunorubicin (daunomycin) which are aromatic polyketide antibiotics that exhibit high cytotoxicity and are widely applied in the chemotherapy of a variety of cancers. Acts jointly with DoxA in the conversion of 13-deoxycarminomycin and 13-deoxydaunorubicin to yield carminomycin and daunorubicin, respectively. This Streptomyces sp. (strain C5) protein is Anthracycline biosynthesis protein DauV (dauV).